The chain runs to 216 residues: MPLSEAAVKVQAALQERGLETPMLPSVFTPEERKDKIEHHMKEILTLMSLDLSDDSLADTPRRIAKMYVDEIFSGLDYANFPKITVIDNKMGFDEMVRVQDISLTSTCEHHLVTIDGTATIAYLPRKKIIGLSKINRIVRFFAQRPQVQERLTQQVLVALQTLLETKDVAVKMDAVHYCVKSRGVMDSTSSTTTTALGGIFKSNPATRAEFLHQSK.

Residues Cys108, His111, and Cys179 each contribute to the Zn(2+) site.

This sequence belongs to the GTP cyclohydrolase I family. As to quaternary structure, toroid-shaped homodecamer, composed of two pentamers of five dimers.

The enzyme catalyses GTP + H2O = 7,8-dihydroneopterin 3'-triphosphate + formate + H(+). It participates in cofactor biosynthesis; 7,8-dihydroneopterin triphosphate biosynthesis; 7,8-dihydroneopterin triphosphate from GTP: step 1/1. This chain is GTP cyclohydrolase 1, found in Shewanella oneidensis (strain ATCC 700550 / JCM 31522 / CIP 106686 / LMG 19005 / NCIMB 14063 / MR-1).